The primary structure comprises 401 residues: Ornithine aminotransferase (401 aa).

Residue Lys-258 is modified to N6-(pyridoxal phosphate)lysine.

The protein belongs to the class-III pyridoxal-phosphate-dependent aminotransferase family. OAT subfamily. Pyridoxal 5'-phosphate is required as a cofactor.

It is found in the cytoplasm. It catalyses the reaction a 2-oxocarboxylate + L-ornithine = L-glutamate 5-semialdehyde + an L-alpha-amino acid. Its pathway is amino-acid biosynthesis; L-proline biosynthesis; L-glutamate 5-semialdehyde from L-ornithine: step 1/1. Functionally, catalyzes the interconversion of ornithine to glutamate semialdehyde. In Bacillus subtilis (strain 168), this protein is Ornithine aminotransferase.